A 250-amino-acid chain; its full sequence is Flavin-dependent thymidylate synthase (250 aa).

The 227-residue stretch at 7–233 folds into the ThyX domain; the sequence is LRVQLIAKTD…PAVFADFEIA (227 aa). FAD is bound by residues Ser71, 95 to 97, and Gln103; that span reads RHR. Residues 92–95, 103–107, and Arg172 each bind dUMP; these read ELIR and QLSQR. The ThyX motif signature appears at 95–105; it reads RHRHFSYSQLS. Residues 188–190 and His194 each bind FAD; that span reads NYR. Arg199 contributes to the dUMP binding site. Arg199 (involved in ionization of N3 of dUMP, leading to its activation) is an active-site residue.

Belongs to the thymidylate synthase ThyX family. As to quaternary structure, homotetramer. The cofactor is FAD.

The catalysed reaction is dUMP + (6R)-5,10-methylene-5,6,7,8-tetrahydrofolate + NADPH + H(+) = dTMP + (6S)-5,6,7,8-tetrahydrofolate + NADP(+). It participates in pyrimidine metabolism; dTTP biosynthesis. Its function is as follows. Catalyzes the reductive methylation of 2'-deoxyuridine-5'-monophosphate (dUMP) to 2'-deoxythymidine-5'-monophosphate (dTMP) while utilizing 5,10-methylenetetrahydrofolate (mTHF) as the methyl donor, and NADPH and FADH(2) as the reductant. This Mycobacterium avium (strain 104) protein is Flavin-dependent thymidylate synthase.